Consider the following 25-residue polypeptide: Small ribosomal subunit protein eS32 (25 aa).

The disordered stretch occupies residues 1–25 (MGGVGKTKRMRRLKRKRRKMRQRSK).

Belongs to the eukaryotic ribosomal protein eS32 family. Component of the small ribosomal subunit.

This Glycine max (Soybean) protein is Small ribosomal subunit protein eS32 (RPL41).